Here is a 568-residue protein sequence, read N- to C-terminus: MPTCWILNESVSFVVALLWLAINIYLFIDTFCWYAEEESFFYTRVILGSALAWARASAVCLNFNCMLILLPVSRNFVSLVRGTSVCCRGPWRRQLDKNLKFHKLVAYGIAVNSVIHIVAHLFNLERYHLGQAKDAEGLLAALSKLGNAPNESYLNPVRTLYTGTTTQLLMTVSGITGLVISLALILIMTSSTEFIRQSSYELFWYTHHIFIFLFISLAIHGGGRIIRGQTPESLRLHNVTFCRDHFDEWQEAASCPVPQFSGKEPSAWKWTLGPVVLYACEIIIRFWRSHQEVVITKVVSHPSAVLELHMKKRDFKMAPGQYIFIQCPSISPLEWHPFTLTSAPQEDFFSVHIRASGDWTEALLKAFGAEGQAPSELCSMPRLAVDGPFGGSLADVFHYPVSVCIATGIGVTPFASLLKSVWYKCCESQSLPGLSKVYFYWICRDAAAFEWFADLLLSLETQMSEQGKAHLLSYHIYLTGWDEYQAIHIALHWDESLDVITGLKQKTFYGRPNWNEEFKQIAYNHPSSSIGVFFCGPKAMSKTLQKMCRLYSSSDPRGVHFYYNKENF.

The Cytoplasmic portion of the chain corresponds to 1 to 12 (MPTCWILNESVS). A helical transmembrane segment spans residues 13-33 (FVVALLWLAINIYLFIDTFCW). Residues 34 to 49 (YAEEESFFYTRVILGS) are Extracellular-facing. Residues 50–70 (ALAWARASAVCLNFNCMLILL) traverse the membrane as a helical segment. In terms of domain architecture, Ferric oxidoreductase spans 55–284 (RASAVCLNFN…VVLYACEIII (230 aa)). Topologically, residues 71–103 (PVSRNFVSLVRGTSVCCRGPWRRQLDKNLKFHK) are cytoplasmic. Residues 104-124 (LVAYGIAVNSVIHIVAHLFNL) form a helical membrane-spanning segment. Residues 125-167 (ERYHLGQAKDAEGLLAALSKLGNAPNESYLNPVRTLYTGTTTQ) are Extracellular-facing. The chain crosses the membrane as a helical span at residues 168-188 (LLMTVSGITGLVISLALILIM). The Cytoplasmic segment spans residues 189 to 201 (TSSTEFIRQSSYE). A helical transmembrane segment spans residues 202 to 222 (LFWYTHHIFIFLFISLAIHGG). Residues 223-395 (GRIIRGQTPE…DGPFGGSLAD (173 aa)) lie on the Extracellular side of the membrane. A glycan (N-linked (GlcNAc...) asparagine) is linked at asparagine 238. The region spanning 285–395 (RFWRSHQEVV…DGPFGGSLAD (111 aa)) is the FAD-binding FR-type domain. A helical transmembrane segment spans residues 396-416 (VFHYPVSVCIATGIGVTPFAS). The Cytoplasmic portion of the chain corresponds to 417-568 (LLKSVWYKCC…VHFYYNKENF (152 aa)).

In terms of assembly, forms a heterodimer with CYBA/p22phox which is essential for its activity and cell membrane localization. Heme serves as cofactor. Post-translationally, N-glycosylated in a CYBA/p22phox-dependent manner. Expressed in the inner ear by the spiral glanglia and the organ of Corti.

Its subcellular location is the cell membrane. It carries out the reaction NADPH + 2 O2 = 2 superoxide + NADP(+) + H(+). Its activity is regulated as follows. Activated by the ototoxic drug cisplatin. Activated by NOXO1. Cooperatively activated by NCF1 and NCF2 or NOXA1 in a phorbol 12-myristate 13-acetate (PMA)-dependent manner. Inhibited by diphenyleneiodonium chloride. In terms of biological role, NADPH oxidase that catalyzes the generation of superoxide from molecular oxygen utilizing NADPH as an electron donor, upon formation of a complex with CYBA/p22phox. Plays a role in the biogenesis of otoconia/otolith, which are crystalline structures of the inner ear involved in the perception of gravity. This Rattus norvegicus (Rat) protein is NADPH oxidase 3 (Nox3).